The chain runs to 269 residues: 3-methyl-2-oxobutanoate hydroxymethyltransferase (269 aa).

Residues aspartate 52 and aspartate 91 each coordinate Mg(2+). 3-methyl-2-oxobutanoate is bound by residues 52–53, aspartate 91, and lysine 121; that span reads DT. Residue glutamate 123 coordinates Mg(2+). The active-site Proton acceptor is glutamate 186.

Belongs to the PanB family. Homodecamer; pentamer of dimers. Requires Mg(2+) as cofactor.

It localises to the cytoplasm. It carries out the reaction 3-methyl-2-oxobutanoate + (6R)-5,10-methylene-5,6,7,8-tetrahydrofolate + H2O = 2-dehydropantoate + (6S)-5,6,7,8-tetrahydrofolate. Its pathway is cofactor biosynthesis; (R)-pantothenate biosynthesis; (R)-pantoate from 3-methyl-2-oxobutanoate: step 1/2. Functionally, catalyzes the reversible reaction in which hydroxymethyl group from 5,10-methylenetetrahydrofolate is transferred onto alpha-ketoisovalerate to form ketopantoate. This Rhodopirellula baltica (strain DSM 10527 / NCIMB 13988 / SH1) protein is 3-methyl-2-oxobutanoate hydroxymethyltransferase.